The chain runs to 712 residues: Cadherin-13 (712 aa).

The first 22 residues, 1-22 (MQHKTQLTLSFLLSQVLLLACA), serve as a signal peptide directing secretion. Positions 23–138 (EDLECTPGFQ…GNLGIPRQKR (116 aa)) are excised as a propeptide. An N-linked (GlcNAc...) asparagine glycan is attached at N86. Cadherin domains lie at 143–245 (TPIL…RPMF), 246–363 (KEGP…PPEF), 364–477 (TKKE…GPVF), 478–585 (HPNP…VPSL), and 586–680 (YPTL…LQVC). N-linked (GlcNAc...) asparagine glycosylation is found at N382, N500, N530, N638, and N671. Residue D693 is the site of GPI-anchor amidated aspartate attachment. A propeptide spans 694 to 712 (ALHISMTLILLSLFSLFCL) (removed in mature form).

In terms of assembly, by contrast to classical cadherins, homodimerization in trans is not mediated by cadherin EC1 domain strand-swapping, but instead through a homophilic adhesive interface which joins two elongated EC1-EC2 domains through a region near their Ca2+-binding sites to form a tetrahedral, X-like shape. In terms of tissue distribution, neural tissues. Also found in muscles; kidney and retina.

The protein localises to the cell membrane. It is found in the cytoplasm. Its function is as follows. Cadherins are calcium-dependent cell adhesion proteins. They preferentially interact with themselves in a homophilic manner in connecting cells; cadherins may thus contribute to the sorting of heterogeneous cell types. May act as a negative regulator of neural cell growth. The chain is Cadherin-13 (CDH13) from Gallus gallus (Chicken).